Consider the following 333-residue polypeptide: NADH-quinone oxidoreductase subunit H (333 aa).

The next 8 membrane-spanning stretches (helical) occupy residues 15 to 35 (FFIF…FVTY), 88 to 108 (FILA…VIPF), 117 to 137 (IGVG…GVLT), 159 to 179 (ISYE…TGSL), 191 to 211 (VWYI…AVAE), 241 to 261 (FFML…TVLF), 273 to 293 (FIPG…LFIW), and 313 to 333 (VLLP…ELFF).

Belongs to the complex I subunit 1 family. NDH-1 is composed of 14 different subunits. Subunits NuoA, H, J, K, L, M, N constitute the membrane sector of the complex.

The protein localises to the cell membrane. The enzyme catalyses a quinone + NADH + 5 H(+)(in) = a quinol + NAD(+) + 4 H(+)(out). Functionally, NDH-1 shuttles electrons from NADH, via FMN and iron-sulfur (Fe-S) centers, to quinones in the respiratory chain. The immediate electron acceptor for the enzyme in this species is believed to be ubiquinone. Couples the redox reaction to proton translocation (for every two electrons transferred, four hydrogen ions are translocated across the cytoplasmic membrane), and thus conserves the redox energy in a proton gradient. This subunit may bind ubiquinone. In Bacillus cytotoxicus (strain DSM 22905 / CIP 110041 / 391-98 / NVH 391-98), this protein is NADH-quinone oxidoreductase subunit H.